Here is a 189-residue protein sequence, read N- to C-terminus: Elongation factor P (189 aa).

N6-(3,6-diaminohexanoyl)-5-hydroxylysine is present on lysine 34.

The protein belongs to the elongation factor P family. In terms of processing, may be beta-lysylated on the epsilon-amino group of Lys-34 by the combined action of EpmA and EpmB, and then hydroxylated on the C5 position of the same residue by EpmC (if this protein is present). Lysylation is critical for the stimulatory effect of EF-P on peptide-bond formation. The lysylation moiety may extend toward the peptidyltransferase center and stabilize the terminal 3-CCA end of the tRNA. Hydroxylation of the C5 position on Lys-34 may allow additional potential stabilizing hydrogen-bond interactions with the P-tRNA.

Its subcellular location is the cytoplasm. Its pathway is protein biosynthesis; polypeptide chain elongation. Its function is as follows. Involved in peptide bond synthesis. Alleviates ribosome stalling that occurs when 3 or more consecutive Pro residues or the sequence PPG is present in a protein, possibly by augmenting the peptidyl transferase activity of the ribosome. Modification of Lys-34 is required for alleviation. This is Elongation factor P from Buchnera aphidicola subsp. Acyrthosiphon pisum (strain APS) (Acyrthosiphon pisum symbiotic bacterium).